We begin with the raw amino-acid sequence, 203 residues long: Twist-related protein 1 (203 aa).

Low complexity predominate over residues Met-1–Ser-18. Residues Met-1–Leu-107 are disordered. Positions Arg-34–Arg-43 are enriched in basic residues. Composition is skewed to gly residues over residues Ala-46–Glu-65 and Gly-80–Ser-100. Residues Thr-109–Leu-160 form the bHLH domain. The interval Arg-162 to Arg-192 is sufficient for transactivation activity.

In terms of assembly, efficient DNA binding requires dimerization with another bHLH protein. Homodimer or heterodimer with E proteins such as TCF3. ID1 binds preferentially to TCF3 but does not interact efficiently with TWIST1 so ID1 levels control the amount of TCF3 available to dimerize with TWIST and thus determine the type of dimer formed.

Its subcellular location is the nucleus. Functionally, acts as a transcriptional regulator. Inhibits myogenesis by sequestrating E proteins, inhibiting trans-activation by MEF2, and inhibiting DNA-binding by MYOD1 through physical interaction. This interaction probably involves the basic domains of both proteins. Also represses expression of pro-inflammatory cytokines such as TNFA and IL1B. Regulates cranial suture patterning and fusion. Activates transcription as a heterodimer with E proteins. Regulates gene expression differentially, depending on dimer composition. Homodimers induce expression of FGFR2 and POSTN while heterodimers repress FGFR2 and POSTN expression and induce THBS1 expression. Heterodimerization is also required for osteoblast differentiation. Represses the activity of the circadian transcriptional activator: NPAS2-BMAL1 heterodimer. In Gorilla gorilla gorilla (Western lowland gorilla), this protein is Twist-related protein 1 (TWIST1).